The primary structure comprises 433 residues: Histidinol dehydrogenase 2 (433 aa).

Positions 130, 192, and 215 each coordinate NAD(+). Residues Ser238, Gln260, and His263 each contribute to the substrate site. Gln260 and His263 together coordinate Zn(2+). Catalysis depends on proton acceptor residues Glu328 and His329. Substrate is bound by residues His329, Asp362, Glu416, and His421. Zn(2+) is bound at residue Asp362. His421 is a Zn(2+) binding site.

It belongs to the histidinol dehydrogenase family. The cofactor is Zn(2+).

It catalyses the reaction L-histidinol + 2 NAD(+) + H2O = L-histidine + 2 NADH + 3 H(+). Its pathway is amino-acid biosynthesis; L-histidine biosynthesis; L-histidine from 5-phospho-alpha-D-ribose 1-diphosphate: step 9/9. Catalyzes the sequential NAD-dependent oxidations of L-histidinol to L-histidinaldehyde and then to L-histidine. The protein is Histidinol dehydrogenase 2 (hisD2) of Nostoc sp. (strain PCC 7120 / SAG 25.82 / UTEX 2576).